A 349-amino-acid chain; its full sequence is Isopentenyl-diphosphate delta-isomerase (349 aa).

6–7 (RK) provides a ligand contact to substrate. FMN contacts are provided by residues 62-64 (AMT), Ser-93, and Asn-122. Gln-152 is a binding site for substrate. Position 153 (Glu-153) interacts with Mg(2+). FMN is bound by residues Lys-184, Thr-214, 259-261 (GVR), and 280-281 (AG).

The protein belongs to the IPP isomerase type 2 family. Homooctamer. Dimer of tetramers. Requires FMN as cofactor. NADPH is required as a cofactor. Mg(2+) serves as cofactor.

The protein localises to the cytoplasm. It catalyses the reaction isopentenyl diphosphate = dimethylallyl diphosphate. Involved in the biosynthesis of isoprenoids. Catalyzes the 1,3-allylic rearrangement of the homoallylic substrate isopentenyl (IPP) to its allylic isomer, dimethylallyl diphosphate (DMAPP). In Geobacillus sp. (strain WCH70), this protein is Isopentenyl-diphosphate delta-isomerase.